Consider the following 1202-residue polypeptide: Liprin-alpha-1 (1202 aa).

The interval 1–33 is disordered; it reads MMCEVMPTISEAEGPPGGGGGHGSGSPSQPDAD. Gly residues predominate over residues 15–24; it reads PPGGGGGHGS. The stretch at 34-141 forms a coiled coil; it reads SHFEQLMVSM…VSRHERSLRM (108 aa). A Phosphoserine modification is found at Ser150. A coiled-coil region spans residues 176 to 214; that stretch reads EKVRERLRVALERCSLLEEELGATHKELMILKEQNNQKK. 2 disordered regions span residues 224 to 245 and 426 to 446; these read NHEQ…SLSH and KNQE…HNKR. Thr230 bears the Phosphothreonine mark. A phosphoserine mark is found at Ser239, Ser242, and Ser244. Coiled-coil stretches lie at residues 249 to 521 and 623 to 669; these read LAKV…GASL and ADAH…SGSL. Ser448 is modified (phosphoserine). The span at 651–662 shows a compositional bias: basic and acidic residues; the sequence is ENTEQRAEEIES. Residues 651–855 are disordered; sequence ENTEQRAEEI…SKLGGQAEKN (205 aa). Residues Ser666, Ser668, and Ser693 each carry the phosphoserine modification. Residues 686–700 are compositionally biased toward low complexity; it reads ASSLASSSPPGSGRS. The span at 725–736 shows a compositional bias: basic and acidic residues; the sequence is SREEVRDDKTTI. Thr761 bears the Phosphothreonine mark. Basic and acidic residues predominate over residues 762–771; it reads VSHEDIRDIR. Ser763 is modified (phosphoserine). Over residues 832-841 the composition is skewed to polar residues; that stretch reads VSETDNSSQD. Residues 847 to 871 adopt a coiled-coil conformation; it reads KLGGQAEKNRKLQKKHELLEEARRQ. SAM domains are found at residues 878 to 944, 963 to 1027, and 1051 to 1120; these read WDGP…IMSL, NHEW…LRRL, and WSND…LLVM. The stretch at 1021 to 1050 forms a coiled coil; that stretch reads IMCLRRLNYDRKELERKREESQSEIKDVLV. Position 1133 is a phosphoserine (Ser1133). A Phosphothreonine modification is found at Thr1159. A disordered region spans residues 1163–1202; that stretch reads NFRVTSSMSSPSMQPKKMQMDGNVSGTQRLDSATVRTYSC. The span at 1168–1179 shows a compositional bias: low complexity; that stretch reads SSMSSPSMQPKK. Over residues 1184 to 1202 the composition is skewed to polar residues; sequence GNVSGTQRLDSATVRTYSC.

This sequence belongs to the liprin family. Liprin-alpha subfamily. Homodimer. Interacts with PTPRF (via D2 domain). Part of a cortical microtubule stabilization complex (CMSC) composed of KANK1, PPFIA1, PPFIBP1, ERC1/ELKS, PHLDB2/LL5beta, CLASPs, KIF21A and possibly additional interactors; within CMSCs KANK1 and PHLDB2/LL5beta seem to be the core components for recruiting microtubule-binding proteins KIF21A and CLASPs, whereas PPFIA1, PPFIBP1 and ERC1/ELKS serve as scaffolds for protein clustering. As to expression, ubiquitous.

Its subcellular location is the cytoplasm. It localises to the cell cortex. In terms of biological role, may regulate the disassembly of focal adhesions. May localize receptor-like tyrosine phosphatases type 2A at specific sites on the plasma membrane, possibly regulating their interaction with the extracellular environment and their association with substrates. This is Liprin-alpha-1 (PPFIA1) from Homo sapiens (Human).